An 88-amino-acid chain; its full sequence is Small ribosomal subunit protein bS20 (88 aa).

This sequence belongs to the bacterial ribosomal protein bS20 family.

In terms of biological role, binds directly to 16S ribosomal RNA. This chain is Small ribosomal subunit protein bS20, found in Brucella abortus (strain S19).